The following is a 345-amino-acid chain: MTDKTSLSYKDAGVDIDAGNALVGRIKGVVKKTRRPEVMGGLGGFGALCALPQKYREPVLVSGTDGVGTKLRLAMDLKRHDTIGIDLVAMCVNDLVVQGAEPLFFLDYYATGKLDVDTASAVISGIAEGCLQSGCSLVGGETAEMPGMYHGEDYDVAGFCVGVVEKSEIIDGSKVSDGDVLIALGSSGPHSNGYSLVRKILEVSGCDPQTTELDGKPLADHLLAPTRIYVKSVLELIEKVDVHAIAHLTGGGFWENIPRVLPDNTQAVIDESSWQWPEVFNWLQTAGNVEHHEMYRTFNCGVGMIIALPAPEVDKALALLNANGENAWKIGIIKASDSEQRVVIE.

This sequence belongs to the AIR synthase family.

It is found in the cytoplasm. It catalyses the reaction 2-formamido-N(1)-(5-O-phospho-beta-D-ribosyl)acetamidine + ATP = 5-amino-1-(5-phospho-beta-D-ribosyl)imidazole + ADP + phosphate + H(+). It participates in purine metabolism; IMP biosynthesis via de novo pathway; 5-amino-1-(5-phospho-D-ribosyl)imidazole from N(2)-formyl-N(1)-(5-phospho-D-ribosyl)glycinamide: step 2/2. In Escherichia coli (strain K12 / MC4100 / BW2952), this protein is Phosphoribosylformylglycinamidine cyclo-ligase.